We begin with the raw amino-acid sequence, 421 residues long: SH2 domain-containing protein 4A (421 aa).

Phosphoserine is present on residues Ser117 and Ser123. Residues 132–271 (DLQAMKKTEP…FLQPLGIPPK (140 aa)) form a disordered region. 2 stretches are compositionally biased toward basic and acidic residues: residues 163-201 (TRKDDKAQTKPVKEKDHEEMKQTEDEKTKQIYKSWKEDS) and 211-230 (KAADEKRRSLAKQAREDYKR). Phosphoserine is present on Ser232. The SH2 domain maps to 315 to 407 (WFHGILTLKK…LGKELLLYPC (93 aa)).

In terms of assembly, interacts with ESR1. In terms of tissue distribution, in the kidney, expressed only in the glomerulus. Expressed in T-cells, B-cells, macrophages and dendritic cells (at protein level). In adult, highest levels are found in muscle and lung with lower levels in kidney.

It is found in the cytoplasm. Inhibits estrogen-induced cell proliferation by competing with PLCG for binding to ESR1, blocking the effect of estrogen on PLCG and repressing estrogen-induced proliferation. May play a role in T-cell development and function. This is SH2 domain-containing protein 4A (Sh2d4a) from Mus musculus (Mouse).